The following is a 315-amino-acid chain: Ribosomal RNA small subunit methyltransferase H (315 aa).

Residues 35-37 (GGH), Asp-55, Phe-80, Asp-102, and Gln-109 contribute to the S-adenosyl-L-methionine site.

This sequence belongs to the methyltransferase superfamily. RsmH family.

The protein localises to the cytoplasm. The catalysed reaction is cytidine(1402) in 16S rRNA + S-adenosyl-L-methionine = N(4)-methylcytidine(1402) in 16S rRNA + S-adenosyl-L-homocysteine + H(+). Its function is as follows. Specifically methylates the N4 position of cytidine in position 1402 (C1402) of 16S rRNA. This is Ribosomal RNA small subunit methyltransferase H from Shewanella pealeana (strain ATCC 700345 / ANG-SQ1).